The following is a 341-amino-acid chain: MSSGTEHRRNQVLRAIVSDFIASHEPVGSKMLVDRHQLGVSSATIRNDMAVLEAEGYITQQHASSGRIPTVKGYRRFVDGINEVKPLSTPERRAILDFLEHGVDLEDVLRRSVQLLSQLTRQVAVVQMPDLRRGRVKHCELVKLGSHRILLVLITDTGRVDQRNVDLGQPISDDDLPRLRDLVNSAMVGRTLDDACTNIAALANEAKGNSMPEELRDVALVVTTVLVETLLERPNDRLILAGTPNLMRTSELSPVVEALEEQVVVLKLLNSVRDLQVQVSIGEENEDEELRGASVVSTGYGNANAVLGGMGVVGPTHLDYSGTISSVTAVAHYVSRILSEE.

It belongs to the HrcA family.

Negative regulator of class I heat shock genes (grpE-dnaK-dnaJ and groELS operons). Prevents heat-shock induction of these operons. The polypeptide is Heat-inducible transcription repressor HrcA (Corynebacterium jeikeium (strain K411)).